A 182-amino-acid chain; its full sequence is Bis(5'-nucleosyl)-tetraphosphatase [asymmetrical] (182 aa).

The 108-residue stretch at 3–110 folds into the HIT domain; sequence KQLYFSKFPV…IPRKKADFSE (108 aa). Residues N28, Q84, and 90–93 contribute to the substrate site; that span reads GQTV. The short motif at 95–99 is the Histidine triad motif element; sequence HVHVH. Catalysis depends on H97, which acts as the Tele-AMP-histidine intermediate. H99 is a substrate binding site. The tract at residues 135-161 is disordered; that stretch reads RYAGDERPPTSMRQAIPKDEDRKPRTL. Positions 150–161 are enriched in basic and acidic residues; sequence IPKDEDRKPRTL.

The enzyme catalyses P(1),P(4)-bis(5'-guanosyl) tetraphosphate + H2O = GMP + GTP + 2 H(+). Asymmetrically hydrolyzes Ap4A to yield AMP and ATP. The polypeptide is Bis(5'-nucleosyl)-tetraphosphatase [asymmetrical] (aph1) (Schizosaccharomyces pombe (strain 972 / ATCC 24843) (Fission yeast)).